Consider the following 587-residue polypeptide: 2-succinyl-5-enolpyruvyl-6-hydroxy-3-cyclohexene-1-carboxylate synthase (587 aa).

The protein belongs to the TPP enzyme family. MenD subfamily. Homodimer. It depends on Mg(2+) as a cofactor. Requires Mn(2+) as cofactor. Thiamine diphosphate serves as cofactor.

The enzyme catalyses isochorismate + 2-oxoglutarate + H(+) = 5-enolpyruvoyl-6-hydroxy-2-succinyl-cyclohex-3-ene-1-carboxylate + CO2. Its pathway is quinol/quinone metabolism; 1,4-dihydroxy-2-naphthoate biosynthesis; 1,4-dihydroxy-2-naphthoate from chorismate: step 2/7. The protein operates within cofactor biosynthesis; phylloquinone biosynthesis. In terms of biological role, catalyzes the thiamine diphosphate-dependent decarboxylation of 2-oxoglutarate and the subsequent addition of the resulting succinic semialdehyde-thiamine pyrophosphate anion to isochorismate to yield 2-succinyl-5-enolpyruvyl-6-hydroxy-3-cyclohexene-1-carboxylate (SEPHCHC). This Prochlorococcus marinus (strain MIT 9312) protein is 2-succinyl-5-enolpyruvyl-6-hydroxy-3-cyclohexene-1-carboxylate synthase.